The primary structure comprises 448 residues: Na(+)-translocating NADH-quinone reductase subunit A (448 aa).

This sequence belongs to the NqrA family. Composed of six subunits; NqrA, NqrB, NqrC, NqrD, NqrE and NqrF.

The enzyme catalyses a ubiquinone + n Na(+)(in) + NADH + H(+) = a ubiquinol + n Na(+)(out) + NAD(+). In terms of biological role, NQR complex catalyzes the reduction of ubiquinone-1 to ubiquinol by two successive reactions, coupled with the transport of Na(+) ions from the cytoplasm to the periplasm. NqrA to NqrE are probably involved in the second step, the conversion of ubisemiquinone to ubiquinol. This is Na(+)-translocating NADH-quinone reductase subunit A from Alcanivorax borkumensis (strain ATCC 700651 / DSM 11573 / NCIMB 13689 / SK2).